The following is a 307-amino-acid chain: Fructokinase (307 aa).

The protein belongs to the carbohydrate kinase PfkB family.

The catalysed reaction is D-fructose + ATP = D-fructose 6-phosphate + ADP + H(+). The protein is Fructokinase (scrK) of Salmonella typhimurium.